A 259-amino-acid chain; its full sequence is GTP cyclohydrolase FolE2 (259 aa).

It belongs to the GTP cyclohydrolase IV family.

It carries out the reaction GTP + H2O = 7,8-dihydroneopterin 3'-triphosphate + formate + H(+). Its pathway is cofactor biosynthesis; 7,8-dihydroneopterin triphosphate biosynthesis; 7,8-dihydroneopterin triphosphate from GTP: step 1/1. Functionally, converts GTP to 7,8-dihydroneopterin triphosphate. This Nitratidesulfovibrio vulgaris (strain DSM 19637 / Miyazaki F) (Desulfovibrio vulgaris) protein is GTP cyclohydrolase FolE2.